We begin with the raw amino-acid sequence, 198 residues long: MEFYPVAIEKLIEEFAKLPSIGKKTAQRLTLHILNLPDDEVREFAKALVKAKGTIKYCSTCGNFTDTDPCALCSNPNRDKSTICVVEQPKDIMTMEKVKEFNGLYHVLHGNISPMQGRGPQDIKIRELVARMNEEVKEVILATNPNIEGEATAMYIAKVLKPLDVKVTRIAAGIPVGGDLEYADEVTLSKALEGRKEI.

Residues 58–73 (CSTCGNFTDTDPCALC) form a C4-type zinc finger. The region spanning 81 to 175 (STICVVEQPK…KVTRIAAGIP (95 aa)) is the Toprim domain.

This sequence belongs to the RecR family.

In terms of biological role, may play a role in DNA repair. It seems to be involved in an RecBC-independent recombinational process of DNA repair. It may act with RecF and RecO. This chain is Recombination protein RecR, found in Clostridium botulinum (strain Alaska E43 / Type E3).